The sequence spans 526 residues: Thymocyte selection-associated high mobility group box protein TOX (526 aa).

Disordered regions lie at residues 138–178 (MPDI…PHGQ) and 192–264 (GLNM…PQKP). A compositionally biased stretch (polar residues) spans 192 to 203 (GLNMGGSNVPHN). A compositionally biased stretch (low complexity) spans 209–220 (GSKSATPSPSSS). A compositionally biased stretch (basic and acidic residues) spans 228 to 245 (DTSKINGGEKRPASDMGK). Positions 237–256 (KRPASDMGKKPKTPKKKKKK) match the Nuclear localization signal motif. A compositionally biased stretch (basic residues) spans 246-256 (KPKTPKKKKKK). The HMG box DNA-binding region spans 261–329 (PQKPVSAYAL…EYLKQLAAYR (69 aa)).

This sequence belongs to the high motility group (HMG) box superfamily. As to quaternary structure, interacts with HBO1 complex composed at least of KAT7/HBO1, ING4, MEAF6, and JADE2; this complex is involved in histone acetylation. Interacts with DNMT1, LEO1, PAF1, SAP130 and SIN3A; these interactors regulate chromatin remodeling. Interacts with an array of proteins involved in RNA processing and translation and DNA replication. As to expression, expressed in NK cells. Highly expressed in tumor-infiltrating CD8-positive T cells (at protein level).

The protein resides in the nucleus. Its function is as follows. Transcriptional regulator with a major role in neural stem cell commitment and corticogenesis as well as in lymphoid cell development and lymphoid tissue organogenesis. Binds to GC-rich DNA sequences in the proximity of transcription start sites and may alter chromatin structure, modifying access of transcription factors to DNA. During cortical development, controls the neural stem cell pool by inhibiting the switch from proliferative to differentiating progenitors. Beyond progenitor cells, promotes neurite outgrowth in newborn neurons migrating to reach the cortical plate. May activate or repress critical genes for neural stem cell fate such as SOX2, EOMES and ROBO2. Plays an essential role in the development of lymphoid tissue-inducer (LTi) cells, a subset necessary for the formation of secondary lymphoid organs: peripheral lymph nodes and Peyer's patches. Acts as a developmental checkpoint and regulates thymocyte positive selection toward T cell lineage commitment. Required for the development of various T cell subsets, including CD4-positive helper T cells, CD8-positive cytotoxic T cells, regulatory T cells and CD1D-dependent natural killer T (NKT) cells. Required for the differentiation of common lymphoid progenitors (CMP) to innate lymphoid cells (ILC). May regulate the NOTCH-mediated gene program, promoting differentiation of the ILC lineage. Required at the progenitor phase of NK cell development in the bone marrow to specify NK cell lineage commitment. Upon chronic antigen stimulation, diverts T cell development by promoting the generation of exhaustive T cells, while suppressing effector and memory T cell programming. May regulate the expression of genes encoding inhibitory receptors such as PDCD1 and induce the exhaustion program, to prevent the overstimulation of T cells and activation-induced cell death. The sequence is that of Thymocyte selection-associated high mobility group box protein TOX from Homo sapiens (Human).